The following is a 409-amino-acid chain: MNTRADVVVVGAGPAGSAAAAWAARAGRDVVVVDAAQFPRDKACGDGLTPRAVAELQRLGMASWLDTRIRHHGLRMSGFGADVEIPWPGPSFPATSSAVPRTELDDRIRSVAADDGAKMMLGTKVVDVTHDSSGRVDAVVLDDGNTVGCAQLIVADGARSTLGRVLGRTWHRETVYGVAIRGYIASPRASEPWITSHLELRSPEGKVLPGYGWMFPLGNGEVNIGVGALATAKRPADAALRPLMSYYADLRREEWGLVGEPRAGLSALLPMGGAVSGVAGPNWMLIGDAAACVNPLNGEGIDYGLETGRLAAELMTSGGVTDYSSAWPTLLQEHYARGFSVARRLALLLTLPRFLQVTGPVAMRSATLMTIAVRVMGNLVTDEDADWIARVWRTAGLASRRIDQRVPFS.

FAD contacts are provided by residues 11–15, 44–47, R101, V125, D288, and 300–301; these read GAGPA, CGDG, and GI.

The protein belongs to the geranylgeranyl reductase family. FAD serves as cofactor.

It carries out the reaction menaquinone-9 + AH2 = beta-dihydromenaquinone-9 + A. It functions in the pathway quinol/quinone metabolism; menaquinone biosynthesis. Catalyzes the reduction of a single double bond in the isoprenoid tail of menaquinone (MK-9) in M.smegmatis, likely the beta-isoprene unit, forming the predominant form of menaquinone found in mycobacteria, MK-9(II-H2). The polypeptide is Menaquinone reductase (Mycolicibacterium smegmatis (strain ATCC 700084 / mc(2)155) (Mycobacterium smegmatis)).